Consider the following 416-residue polypeptide: Enterobactin exporter EntS (416 aa).

The Cytoplasmic portion of the chain corresponds to 1 to 21 (MNKQSWLLNLSLLKTHPAFRA). The chain crosses the membrane as a helical span at residues 22-42 (VFLARFISIVSLGLLGVAVPV). At 43-55 (QIQMMTHSTWQVG) the chain is on the periplasmic side. The helical transmembrane segment at 56–76 (LSVTLTGGAMFVGLMVGGVLA) threads the bilayer. At 77–83 (DRYERKK) the chain is on the cytoplasmic side. A helical membrane pass occupies residues 84-104 (VILLARGTCGIGFIGLCLNAL). Over 105-109 (LPEPS) the chain is Periplasmic. The helical transmembrane segment at 110-130 (LLAIYLLGLWDGFFASLGVTA) threads the bilayer. Topologically, residues 131 to 156 (LLAATPALVGRENLMQAGAITMLTVR) are cytoplasmic. A helical membrane pass occupies residues 157–177 (LGSVISPMIGGLLLATGGVAW). Position 178 (N178) is a topological domain, periplasmic. Residues 179–199 (YGLAAAGTFITLLPLLSLPAL) traverse the membrane as a helical segment. The Cytoplasmic portion of the chain corresponds to 200 to 218 (PPPPQPREHPLKSLLAGFR). The helical transmembrane segment at 219–239 (FLLASPLVGGIALLGGLLTMA) threads the bilayer. Over 240–256 (SAVRVLYPALADNWQMS) the chain is Periplasmic. A helical transmembrane segment spans residues 257-277 (AAQIGFLYAAIPLGAAIGALT). Topologically, residues 278 to 287 (SGKLAHSARP) are cytoplasmic. A helical transmembrane segment spans residues 288 to 307 (GLLMLLSTLGSFLAIGLFGL). The Periplasmic segment spans residues 308–313 (MPMWIL). A helical transmembrane segment spans residues 314–336 (GVVCLALFGWLSAVSSLLQYTML). Residues 337–356 (QTQTPEAMLGRINGLWTAQN) are Cytoplasmic-facing. The chain crosses the membrane as a helical span at residues 357-377 (VTGDAIGAALLGGLGAMMTPV). A378 is a topological domain (periplasmic). The chain crosses the membrane as a helical span at residues 379–399 (SASASGFGLLIIGVLLLLVLV). Residues 400 to 416 (ELRRFRQTPPQVTASDS) lie on the Cytoplasmic side of the membrane.

Belongs to the major facilitator superfamily. EntS (TC 2.A.1.38) family.

It localises to the cell inner membrane. Functionally, component of an export pathway for enterobactin. The polypeptide is Enterobactin exporter EntS (Escherichia coli (strain 55989 / EAEC)).